The chain runs to 206 residues: Phosphoheptose isomerase (206 aa).

Residues 37-195 (LVDAFKAGKK…IEQKMDINNE (159 aa)) form the SIS domain. 52 to 54 (NGG) provides a ligand contact to substrate. Zn(2+) is bound by residues His-61 and Glu-65. Residues Glu-65, 93 to 94 (ND), 119 to 121 (STS), Ser-124, and Gln-172 contribute to the substrate site. Residues Gln-172 and His-180 each contribute to the Zn(2+) site.

The protein belongs to the SIS family. GmhA subfamily. In terms of assembly, homotetramer. It depends on Zn(2+) as a cofactor.

It is found in the cytoplasm. It carries out the reaction 2 D-sedoheptulose 7-phosphate = D-glycero-alpha-D-manno-heptose 7-phosphate + D-glycero-beta-D-manno-heptose 7-phosphate. It participates in carbohydrate biosynthesis; D-glycero-D-manno-heptose 7-phosphate biosynthesis; D-glycero-alpha-D-manno-heptose 7-phosphate and D-glycero-beta-D-manno-heptose 7-phosphate from sedoheptulose 7-phosphate: step 1/1. In terms of biological role, catalyzes the isomerization of sedoheptulose 7-phosphate in D-glycero-D-manno-heptose 7-phosphate. This is Phosphoheptose isomerase from Hamiltonella defensa subsp. Acyrthosiphon pisum (strain 5AT).